Here is a 289-residue protein sequence, read N- to C-terminus: MEEMIEPLDRVFLQLGPFTIYWYGVLIGLGVIIGYVMASRESVRRGMPKDTFSDFVMYVIPVAIIFARLYYVIFRWEQYADDPIRVFYIWEGGLAIHGALIGGVLTAYILTKKRQLSFWQLMDVAAPSILIGQAIGRWGNFMNQEVYGGPVTREFLEGLMLPEFIINQMYINGTYYHPTFLYESIWNFIGVVVLLLLRRVNLRRGELFFSYLIWYSIGRFFIEGMRLDNLMIGDSLRTAQIVSILLIVGALLLWWYRRAKGLATERYLDPHQPARTNGNKKKTKKKKKK.

The next 4 helical transmembrane spans lie at 18 to 38 (FTIY…YVMA), 54 to 74 (DFVM…YVIF), 86 to 106 (VFYI…GVLT), and 116 to 136 (LSFW…QAIG). Arg137 is a binding site for a 1,2-diacyl-sn-glycero-3-phospho-(1'-sn-glycerol). 3 consecutive transmembrane segments (helical) span residues 177 to 197 (HPTF…LLLL), 205 to 225 (GELF…IEGM), and 236 to 256 (LRTA…LWWY).

It belongs to the Lgt family.

It is found in the cell membrane. It carries out the reaction L-cysteinyl-[prolipoprotein] + a 1,2-diacyl-sn-glycero-3-phospho-(1'-sn-glycerol) = an S-1,2-diacyl-sn-glyceryl-L-cysteinyl-[prolipoprotein] + sn-glycerol 1-phosphate + H(+). It participates in protein modification; lipoprotein biosynthesis (diacylglyceryl transfer). In terms of biological role, catalyzes the transfer of the diacylglyceryl group from phosphatidylglycerol to the sulfhydryl group of the N-terminal cysteine of a prolipoprotein, the first step in the formation of mature lipoproteins. This Halalkalibacterium halodurans (strain ATCC BAA-125 / DSM 18197 / FERM 7344 / JCM 9153 / C-125) (Bacillus halodurans) protein is Phosphatidylglycerol--prolipoprotein diacylglyceryl transferase.